Reading from the N-terminus, the 153-residue chain is Histone H2B.3 (153 aa).

Basic and acidic residues-rich tracts occupy residues methionine 1 to proline 28 and glutamate 36 to lysine 53. A disordered region spans residues methionine 1–lysine 61. N6-acetyllysine occurs at positions 7 and 37. Residue lysine 149 forms a Glycyl lysine isopeptide (Lys-Gly) (interchain with G-Cter in ubiquitin) linkage.

It belongs to the histone H2B family. In terms of assembly, the nucleosome is a histone octamer containing two molecules each of H2A, H2B, H3 and H4 assembled in one H3-H4 heterotetramer and two H2A-H2B heterodimers. The octamer wraps approximately 147 bp of DNA. In terms of processing, can be acetylated to form H2BK6ac and H2BK33ac. Post-translationally, monoubiquitinated by BRE1 to form H2BK143ub1 and deubiquitinated by UBP26. Required for heterochromatic histone H3 di- and trimethylation at H3K4me. May give a specific tag for epigenetic transcriptional activation.

Its subcellular location is the nucleus. The protein localises to the chromosome. Core component of nucleosome. Nucleosomes wrap and compact DNA into chromatin, limiting DNA accessibility to the cellular machineries which require DNA as a template. Histones thereby play a central role in transcription regulation, DNA repair, DNA replication and chromosomal stability. DNA accessibility is regulated via a complex set of post-translational modifications of histones, also called histone code, and nucleosome remodeling. The protein is Histone H2B.3 (H2B.3) of Oryza sativa subsp. japonica (Rice).